The chain runs to 294 residues: UPF0761 membrane protein YPTB0027 (294 aa).

Helical transmembrane passes span 44–64, 67–87, 108–128, 136–156, 185–205, 212–232, and 246–266; these read LLSLVPLITVIFALFAAFPMF, ISIKLKAFIFANFMPATGDII, GLIVTALLLIYSVDSVLNIIW, LVFSFAVYWMVLTLGPILVGA, VFPLLISWVSFWLLYSVVPTV, ALIGALVAALLFELGKKGFAM, and VLAVIPILFLWVYWSWCIVLL.

The protein belongs to the UPF0761 family.

The protein localises to the cell inner membrane. The sequence is that of UPF0761 membrane protein YPTB0027 from Yersinia pseudotuberculosis serotype I (strain IP32953).